The sequence spans 347 residues: NADH-ubiquinone oxidoreductase chain 2 (347 aa).

11 consecutive transmembrane segments (helical) span residues 3 to 23 (PIIF…VMIS), 25 to 45 (HWLR…PIMM), 66 to 86 (ASML…QWTV), 96 to 116 (MLMT…FWVP), 122 to 142 (IPLS…MSVL), 145 to 165 (ILPS…IMIG), 178 to 198 (IMAY…PYNP), 200 to 220 (MMLL…LLFM), 237 to 257 (MPIM…LPPL), 274 to 294 (NSII…YFYM), and 325 to 345 (LLPT…ILSI).

It belongs to the complex I subunit 2 family. As to quaternary structure, core subunit of respiratory chain NADH dehydrogenase (Complex I) which is composed of 45 different subunits. Interacts with TMEM242.

The protein resides in the mitochondrion inner membrane. The enzyme catalyses a ubiquinone + NADH + 5 H(+)(in) = a ubiquinol + NAD(+) + 4 H(+)(out). In terms of biological role, core subunit of the mitochondrial membrane respiratory chain NADH dehydrogenase (Complex I) which catalyzes electron transfer from NADH through the respiratory chain, using ubiquinone as an electron acceptor. Essential for the catalytic activity and assembly of complex I. This chain is NADH-ubiquinone oxidoreductase chain 2, found in Capra hircus (Goat).